A 364-amino-acid polypeptide reads, in one-letter code: Caffeic acid 3-O-methyltransferase 2 (364 aa).

Residue 129-135 (MNQDKVL) coordinates substrate. The segment at 161–179 (AFEYHGTDPRFNKVFNKGM) is substrate binding. G207, D230, D250, M251, and K264 together coordinate S-adenosyl-L-methionine. H268 acts as the Proton acceptor in catalysis.

Belongs to the class I-like SAM-binding methyltransferase superfamily. Cation-independent O-methyltransferase family. COMT subfamily. As to quaternary structure, homodimer.

It carries out the reaction (E)-caffeate + S-adenosyl-L-methionine = (E)-ferulate + S-adenosyl-L-homocysteine + H(+). Its pathway is aromatic compound metabolism; phenylpropanoid biosynthesis. Its function is as follows. Catalyzes the conversion of caffeic acid to ferulic acid and of 5-hydroxyferulic acid to sinapic acid. The resulting products may subsequently be converted to the corresponding alcohols that are incorporated into lignins. This chain is Caffeic acid 3-O-methyltransferase 2 (OMT2), found in Populus tremuloides (Quaking aspen).